Here is a 1342-residue protein sequence, read N- to C-terminus: DNA-directed RNA polymerase subunit beta (1342 aa).

Belongs to the RNA polymerase beta chain family. As to quaternary structure, the RNAP catalytic core consists of 2 alpha, 1 beta, 1 beta' and 1 omega subunit. When a sigma factor is associated with the core the holoenzyme is formed, which can initiate transcription.

The enzyme catalyses RNA(n) + a ribonucleoside 5'-triphosphate = RNA(n+1) + diphosphate. In terms of biological role, DNA-dependent RNA polymerase catalyzes the transcription of DNA into RNA using the four ribonucleoside triphosphates as substrates. The polypeptide is DNA-directed RNA polymerase subunit beta (Klebsiella pneumoniae subsp. pneumoniae (strain ATCC 700721 / MGH 78578)).